The chain runs to 75 residues: UPF0181 protein ETA_15280 (75 aa).

The protein belongs to the UPF0181 family.

The chain is UPF0181 protein ETA_15280 from Erwinia tasmaniensis (strain DSM 17950 / CFBP 7177 / CIP 109463 / NCPPB 4357 / Et1/99).